The sequence spans 206 residues: Protein GrpE (206 aa).

Residues 1–36 (MTDSNGPKDNNQDQAQAAADPVVSKPYIMPDDPEDG) form a disordered region.

This sequence belongs to the GrpE family. Homodimer.

The protein resides in the cytoplasm. Participates actively in the response to hyperosmotic and heat shock by preventing the aggregation of stress-denatured proteins, in association with DnaK and GrpE. It is the nucleotide exchange factor for DnaK and may function as a thermosensor. Unfolded proteins bind initially to DnaJ; upon interaction with the DnaJ-bound protein, DnaK hydrolyzes its bound ATP, resulting in the formation of a stable complex. GrpE releases ADP from DnaK; ATP binding to DnaK triggers the release of the substrate protein, thus completing the reaction cycle. Several rounds of ATP-dependent interactions between DnaJ, DnaK and GrpE are required for fully efficient folding. The polypeptide is Protein GrpE (Rhodopseudomonas palustris (strain HaA2)).